A 511-amino-acid polypeptide reads, in one-letter code: 3-octaprenyl-4-hydroxybenzoate carboxy-lyase (511 aa).

Residue N176 coordinates Mn(2+). Prenylated FMN-binding positions include 179-181, 193-195, and 198-199; these read IYR, RWL, and RG. E242 contacts Mn(2+). The active-site Proton donor is D311.

It belongs to the UbiD family. As to quaternary structure, homohexamer. Requires prenylated FMN as cofactor. It depends on Mn(2+) as a cofactor.

Its subcellular location is the cell membrane. It catalyses the reaction a 4-hydroxy-3-(all-trans-polyprenyl)benzoate + H(+) = a 2-(all-trans-polyprenyl)phenol + CO2. The protein operates within cofactor biosynthesis; ubiquinone biosynthesis. In terms of biological role, catalyzes the decarboxylation of 3-octaprenyl-4-hydroxy benzoate to 2-octaprenylphenol, an intermediate step in ubiquinone biosynthesis. The chain is 3-octaprenyl-4-hydroxybenzoate carboxy-lyase from Laribacter hongkongensis (strain HLHK9).